The sequence spans 432 residues: Queuine tRNA-ribosyltransferase accessory subunit 2 (432 aa).

The Zn(2+) site is built by Cys-329, Cys-331, Cys-334, and His-360. The segment at 390-432 is disordered; it reads GQKSLPPYEPPKEEKLPMPAAQKAELMEPMEDLGEKQNKKQRA. The span at 422 to 432 shows a compositional bias: basic and acidic residues; that stretch reads LGEKQNKKQRA.

Belongs to the queuine tRNA-ribosyltransferase family. QTRT2 subfamily. Heterodimer of a catalytic subunit and an accessory subunit. Zn(2+) is required as a cofactor.

The protein localises to the cytoplasm. Non-catalytic subunit of the queuine tRNA-ribosyltransferase (TGT) that catalyzes the base-exchange of a guanine (G) residue with queuine (Q) at position 34 (anticodon wobble position) in tRNAs with GU(N) anticodons (tRNA-Asp, -Asn, -His and -Tyr), resulting in the hypermodified nucleoside queuosine (7-(((4,5-cis-dihydroxy-2-cyclopenten-1-yl)amino)methyl)-7-deazaguanosine). This chain is Queuine tRNA-ribosyltransferase accessory subunit 2, found in Anopheles gambiae (African malaria mosquito).